The following is a 123-amino-acid chain: Large ribosomal subunit protein bL20 (123 aa).

It belongs to the bacterial ribosomal protein bL20 family.

Binds directly to 23S ribosomal RNA and is necessary for the in vitro assembly process of the 50S ribosomal subunit. It is not involved in the protein synthesizing functions of that subunit. This chain is Large ribosomal subunit protein bL20, found in Chlamydia trachomatis serovar L2b (strain UCH-1/proctitis).